Reading from the N-terminus, the 145-residue chain is Peptide methionine sulfoxide reductase MsrB (145 aa).

Positions 6–129 (KNERLQQLTD…NSAALRFIPV (124 aa)) constitute a MsrB domain. Cys118 serves as the catalytic Nucleophile.

The protein belongs to the MsrB Met sulfoxide reductase family.

The enzyme catalyses L-methionyl-[protein] + [thioredoxin]-disulfide + H2O = L-methionyl-(R)-S-oxide-[protein] + [thioredoxin]-dithiol. In Listeria monocytogenes serotype 4a (strain HCC23), this protein is Peptide methionine sulfoxide reductase MsrB.